We begin with the raw amino-acid sequence, 466 residues long: 23S rRNA (uracil(1939)-C(5))-methyltransferase RlmD (466 aa).

The tract at residues 1-22 (MSSQPNPTSHPEAASAASAASN) is disordered. In terms of domain architecture, TRAM spans 17–81 (ASAASNDPVV…PSYEQAHLVE (65 aa)). 4 residues coordinate [4Fe-4S] cluster: C94, C100, C103, and C182. Residues Q290, F319, N324, E340, N368, and D389 each contribute to the S-adenosyl-L-methionine site. The active-site Nucleophile is C422.

The protein belongs to the class I-like SAM-binding methyltransferase superfamily. RNA M5U methyltransferase family. RlmD subfamily.

The catalysed reaction is uridine(1939) in 23S rRNA + S-adenosyl-L-methionine = 5-methyluridine(1939) in 23S rRNA + S-adenosyl-L-homocysteine + H(+). In terms of biological role, catalyzes the formation of 5-methyl-uridine at position 1939 (m5U1939) in 23S rRNA. This is 23S rRNA (uracil(1939)-C(5))-methyltransferase RlmD from Cupriavidus metallidurans (strain ATCC 43123 / DSM 2839 / NBRC 102507 / CH34) (Ralstonia metallidurans).